Consider the following 469-residue polypeptide: Glutamate--tRNA ligase (469 aa).

The short motif at Pro-9 to Gly-19 is the 'HIGH' region element. Positions 98, 100, 125, and 127 each coordinate Zn(2+). The 'KMSKS' region signature appears at Lys-236–Arg-240. Lys-239 contacts ATP.

It belongs to the class-I aminoacyl-tRNA synthetase family. Glutamate--tRNA ligase type 1 subfamily. In terms of assembly, monomer. Zn(2+) is required as a cofactor.

It is found in the cytoplasm. The catalysed reaction is tRNA(Glu) + L-glutamate + ATP = L-glutamyl-tRNA(Glu) + AMP + diphosphate. Catalyzes the attachment of glutamate to tRNA(Glu) in a two-step reaction: glutamate is first activated by ATP to form Glu-AMP and then transferred to the acceptor end of tRNA(Glu). This Shewanella sp. (strain ANA-3) protein is Glutamate--tRNA ligase.